Consider the following 79-residue polypeptide: Large ribosomal subunit protein uL29 (79 aa).

This sequence belongs to the universal ribosomal protein uL29 family.

The sequence is that of Large ribosomal subunit protein uL29 from Tropheryma whipplei (strain TW08/27) (Whipple's bacillus).